A 278-amino-acid polypeptide reads, in one-letter code: Large ribosomal subunit protein uL2 (278 aa).

Residues 226 to 278 form a disordered region; the sequence is NPIDHPHGGGEGRTSGGRHPVTPWGKPTKGKKTRSNKSTDKFILISRHKRKKK.

This sequence belongs to the universal ribosomal protein uL2 family. As to quaternary structure, part of the 50S ribosomal subunit. Forms a bridge to the 30S subunit in the 70S ribosome.

One of the primary rRNA binding proteins. Required for association of the 30S and 50S subunits to form the 70S ribosome, for tRNA binding and peptide bond formation. It has been suggested to have peptidyltransferase activity; this is somewhat controversial. Makes several contacts with the 16S rRNA in the 70S ribosome. This chain is Large ribosomal subunit protein uL2, found in Rhodopseudomonas palustris (strain HaA2).